Here is a 125-residue protein sequence, read N- to C-terminus: Ly6/PLAUR domain-containing protein 2 (125 aa).

Positions 1 to 22 (MRGTRLALLALVLAACGELAPA) are cleaved as a signal peptide. One can recognise a UPAR/Ly6 domain in the interval 25-100 (CYVCPEPTGV…VSCCNTELCN (76 aa)). A glycan (N-linked (GlcNAc...) asparagine) is linked at Asn46. The GPI-anchor amidated glycine moiety is linked to residue Gly103. A propeptide spans 104-125 (APALNSLHCGALTLLPLLSLRL) (removed in mature form).

The protein resides in the cell membrane. The protein is Ly6/PLAUR domain-containing protein 2 (LYPD2) of Homo sapiens (Human).